The primary structure comprises 273 residues: Large ribosomal subunit protein uL2 (273 aa).

Residues 221–263 form a disordered region; the sequence is RGTAMNPVDHPHGGGEGRNFGKHPVTPWGVQTKGKKTRHNKRT. Over residues 253-263 the composition is skewed to basic residues; it reads KGKKTRHNKRT.

Belongs to the universal ribosomal protein uL2 family. As to quaternary structure, part of the 50S ribosomal subunit. Forms a bridge to the 30S subunit in the 70S ribosome.

Its function is as follows. One of the primary rRNA binding proteins. Required for association of the 30S and 50S subunits to form the 70S ribosome, for tRNA binding and peptide bond formation. It has been suggested to have peptidyltransferase activity; this is somewhat controversial. Makes several contacts with the 16S rRNA in the 70S ribosome. The chain is Large ribosomal subunit protein uL2 from Histophilus somni (strain 2336) (Haemophilus somnus).